A 775-amino-acid polypeptide reads, in one-letter code: MALADKRLENLQIYRVLQCVRNKDKKQIEKLTRLGYPELINFTEPIDGLSALHLASISNDTDMVSFLLKLGAHPDVQDHMGCTPTMRAAELGHELSMEILAKAKADMTIVDNEGKGVLFYCILPTKRHYRCSLIALEHGADVNNITYEGKPVFLRACEEAHDVKDMCLTFLEKGANPNAINTSTGRTALMESSREGVLEIVRGILERGGEVNAYDNDRHHAAHFAAKGGFFDILKLLFAYNGDMGLIGMDGNTPLHFAAMGGFADCCKYIAQRGCDLKWKNLEHKTPRVVAKDGGFKAASKEIRRAERTAAKLAKTGAKNPNPLWALRLHDWSIEHETSLRNAFKFVDRGDGVVSKDDFVVALEERQEYATSEQLLSVAQMHEKSRGGGVNINEFFKGTKYLSKSYVLGSFGPKKKKRGLGKKPRKGKFVLPLPICTIPENAFPRRPDGGPPYYMIETYQNVSDSHRFNRDHPPEHPIQDDSEWYIDDPSRVFANISFITKAGDLASLKKAIETGIPVDMKDNTYKTPLMIACASGNIDVVKFLIEKGANVNATDNFLWTPLHFACHAGQQDIVELLVKAGASIDATSINNSTPLSRAIESCRLDTVKYLLDMGAKFQIENRKGHAAMDIAKAYADYRIIDMIKEKLDNLPKQADNQKMKGKLPKLKTEGTDVKKEEETLSSIYTVPAITEEKKVHRDSVVYLNSLITSGFTKKVDITFIPKRIWSPEATTAELIRKRELRRERFTYEVDFEDFMMPFQKNITEKAQALEATLKN.

ANK repeat units follow at residues 47 to 76 (DGLS…HPDV), 184 to 213 (TGRT…EVNA), 217 to 246 (DRHH…DMGL), 250 to 279 (DGNT…DLKW), 524 to 553 (TYKT…NVNA), 557 to 586 (FLWT…SIDA), 590 to 619 (NNST…KFQI), and 623 to 652 (KGHA…NLPK).

This is Ankyrin repeat and EF-hand domain-containing protein 1 (Ankef1) from Mus musculus (Mouse).